Consider the following 262-residue polypeptide: Acetylglutamate kinase (262 aa).

Substrate contacts are provided by residues 46–47, Arg-68, and Asn-160; that span reads GG.

This sequence belongs to the acetylglutamate kinase family. ArgB subfamily.

It localises to the cytoplasm. The enzyme catalyses N-acetyl-L-glutamate + ATP = N-acetyl-L-glutamyl 5-phosphate + ADP. The protein operates within amino-acid biosynthesis; L-arginine biosynthesis; N(2)-acetyl-L-ornithine from L-glutamate: step 2/4. Functionally, catalyzes the ATP-dependent phosphorylation of N-acetyl-L-glutamate. This chain is Acetylglutamate kinase, found in Shewanella amazonensis (strain ATCC BAA-1098 / SB2B).